The primary structure comprises 290 residues: Short neuropeptide F (290 aa).

The signal sequence occupies residues methionine 1–alanine 32. The propeptide occupies glutamate 33–glutamate 87. Phenylalanine amide occurs at positions 100 and 134. The propeptide occupies aspartate 138–asparagine 290. The tract at residues valine 238–asparagine 290 is disordered. The span at aspartate 244–serine 257 shows a compositional bias: acidic residues. Over residues isoleucine 281–asparagine 290 the composition is skewed to polar residues.

This sequence belongs to the NPY family.

It localises to the secreted. Functionally, plays a role in controlling food intake and regulating body size. This Drosophila pseudoobscura pseudoobscura (Fruit fly) protein is Short neuropeptide F.